A 781-amino-acid polypeptide reads, in one-letter code: AP-3 complex subunit beta (781 aa).

HEAT repeat units follow at residues 113-151 (PNLA…ASLY), 153-186 (IILH…EQGI), 187-224 (SIKD…QELQ), 294-332 (DHDL…PKTF), and 521-559 (PRIC…HDVD). 2 disordered regions span residues 694–713 (KPKR…TSSH) and 731–781 (ARQS…ETTE). Over residues 699 to 712 (ASVSSVPSNTFTSS) the composition is skewed to polar residues. A compositionally biased stretch (acidic residues) spans 746–758 (STSEETDHTDDES). Over residues 759-774 (GSSSGDESTESSYVSS) the composition is skewed to low complexity.

Belongs to the adaptor complexes large subunit family. As to quaternary structure, adaptor protein complex 3 (AP-3) is a heterotetramer composed of 2 large adaptins (APL5 and APL6), a medium adaptin (APM3) and a small adaptin (APS3).

It localises to the golgi apparatus. The protein localises to the cytoplasmic vesicle. Its subcellular location is the clathrin-coated vesicle membrane. Part of the AP-3 complex, an adaptor-related complex which is not clathrin-associated. The complex is associated with the Golgi region as well as more peripheral structures. It facilitates the budding of vesicles from the Golgi membrane and may be directly involved in trafficking to the vacuole. The protein is AP-3 complex subunit beta (APL6) of Eremothecium gossypii (strain ATCC 10895 / CBS 109.51 / FGSC 9923 / NRRL Y-1056) (Yeast).